We begin with the raw amino-acid sequence, 292 residues long: 4-hydroxy-tetrahydrodipicolinate synthase (292 aa).

Thr-44 is a binding site for pyruvate. The active-site Proton donor/acceptor is the Tyr-132. The Schiff-base intermediate with substrate role is filled by Lys-161. Ile-203 serves as a coordination point for pyruvate.

The protein belongs to the DapA family. As to quaternary structure, homotetramer; dimer of dimers.

The protein resides in the cytoplasm. It carries out the reaction L-aspartate 4-semialdehyde + pyruvate = (2S,4S)-4-hydroxy-2,3,4,5-tetrahydrodipicolinate + H2O + H(+). The protein operates within amino-acid biosynthesis; L-lysine biosynthesis via DAP pathway; (S)-tetrahydrodipicolinate from L-aspartate: step 3/4. Its function is as follows. Catalyzes the condensation of (S)-aspartate-beta-semialdehyde [(S)-ASA] and pyruvate to 4-hydroxy-tetrahydrodipicolinate (HTPA). This is 4-hydroxy-tetrahydrodipicolinate synthase from Fervidobacterium nodosum (strain ATCC 35602 / DSM 5306 / Rt17-B1).